Here is a 770-residue protein sequence, read N- to C-terminus: Arf-GAP with coiled-coil, ANK repeat and PH domain-containing protein 2 (770 aa).

The BAR domain maps to 1–226 (MKMTVDFEEC…MKDLGAQLDR (226 aa)). The region spanning 266–361 (GIVMEGYLFK…WIKAVQTSIA (96 aa)) is the PH domain. Residues 371–391 (SEKLDKKSSPSTGSLDSGNES) are disordered. A compositionally biased stretch (polar residues) spans 379–388 (SPSTGSLDSG). Phosphoserine occurs at positions 384 and 387. In terms of domain architecture, Arf-GAP spans 399–520 (ESALQRVQCI…KFVDKYSALL (122 aa)). The C4-type zinc-finger motif lies at 414-437 (CCDCGLADPRWASINLGITLCIEC). A Phosphoserine modification is found at S521. The disordered stretch occupies residues 542–572 (ARASVHTPVKSNDSGIQQCSEDGRESLPSTV). The segment covering 550–561 (VKSNDSGIQQCS) has biased composition (polar residues). S573 and S576 each carry phosphoserine. 3 ANK repeats span residues 632–661 (NQAT…NVNQ), 665–694 (QGRG…NQHA), and 698–727 (EGKD…NEEM). Residue Y734 is modified to Phosphotyrosine. S767 carries the post-translational modification Phosphoserine.

In terms of assembly, interacts with RAB35 (GTP-bound form); the interaction is direct and probably recruits ACAP2 to membranes. Interacts with MICALL1; the interaction is indirect through RAB35.

The protein localises to the endosome membrane. It is found in the cell membrane. With respect to regulation, GAP activity stimulated by phosphatidylinositol 4,5-bisphosphate (PIP2) and phosphatidic acid. Its function is as follows. GTPase-activating protein (GAP) for ADP ribosylation factor 6 (ARF6). Doesn't show GAP activity for RAB35. The sequence is that of Arf-GAP with coiled-coil, ANK repeat and PH domain-containing protein 2 (Acap2) from Mus musculus (Mouse).